A 121-amino-acid chain; its full sequence is MAKVNAREARIVRHERLRKKVSGTEARPRLCVFRSIENIYTQVINDNCGSTLVQASTKDAELKAELDGKTKTEQAVVIGNLIAKRSLEAGISEVVFDRGGYKYHGRVKALAEAARSGGLKF.

The protein belongs to the universal ribosomal protein uL18 family. In terms of assembly, part of the 50S ribosomal subunit; part of the 5S rRNA/L5/L18/L25 subcomplex. Contacts the 5S and 23S rRNAs.

This is one of the proteins that bind and probably mediate the attachment of the 5S RNA into the large ribosomal subunit, where it forms part of the central protuberance. This is Large ribosomal subunit protein uL18 from Dehalococcoides mccartyi (strain ATCC BAA-2266 / KCTC 15142 / 195) (Dehalococcoides ethenogenes (strain 195)).